A 316-amino-acid polypeptide reads, in one-letter code: NAC domain-containing protein 2 (316 aa).

Positions 17–170 (LPPGFRFHPT…DWVLCRLYNK (154 aa)) constitute an NAC domain. A DNA-binding region spans residues 114–176 (LGIKKALVFY…LYNKKNEWEK (63 aa)). The tract at residues 185-210 (EEASDMVTSQSHSHTHSWGETRTPES) is disordered. Over residues 190–200 (MVTSQSHSHTH) the composition is skewed to polar residues.

As to quaternary structure, forms homodimer. Interacts with NAC071. Expressed in roots and stamens.

The protein resides in the nucleus. Functionally, transcription factor that possesses transactivation activity. Transcription activator involved in response to abiotic stresses. Plays a positive role during dehydration and salt stress. Binds specifically to the 5'-CATGTG-3' motif found in promoters of stress-responsive genes. The chain is NAC domain-containing protein 2 from Oryza sativa subsp. japonica (Rice).